Consider the following 246-residue polypeptide: Predicted GPI-anchored protein 33 (246 aa).

Positions 1–16 (MRGIILLSFVLTSCLA) are cleaved as a signal peptide. An N-linked (GlcNAc...) asparagine glycan is attached at N214. N219 carries GPI-anchor amidated asparagine lipidation. Positions 220–246 (AAGVYSTNSVLVFVSICIGFIGGSLGI) are cleaved as a propeptide — removed in mature form.

The protein resides in the cell membrane. The sequence is that of Predicted GPI-anchored protein 33 (PGA33) from Candida albicans (strain SC5314 / ATCC MYA-2876) (Yeast).